A 114-amino-acid chain; its full sequence is Pole-localizer protein TmaR (114 aa).

The stretch at 70 to 111 (RDDYESRVDDYTIRNAELSKQRREASTKMKEQKKAHAELLKN) forms a coiled coil. Residues 89–114 (KQRREASTKMKEQKKAHAELLKNAEK) are disordered.

This sequence belongs to the pole-localizer TmaR family.

Its subcellular location is the cytoplasm. Pole-localizer protein involved in the regulation of several cellular processes. This Haemophilus influenzae (strain 86-028NP) protein is Pole-localizer protein TmaR.